The primary structure comprises 307 residues: MAEENKILVTHFVLTGLTDHPGLQAPLFLVFLVIYLITLVGNLGLMALIWKDPHLHTPIYLFLGSLAFADACTSSSVTSKMLINFLSKNHMLSMAKCATQFYFFGSNATTECFLLVVMAYDRYVAICNPLLYPVVMSNSLCTQFIGISYFIGFLHSAIHVGLLFRLTFCRSNIIHYFYCEILQLFKISCTNPTVNILLIFIFSAFIQVFTFMTLIVSYSYILSAILKKKSEKGRSKAFSTCSAHLLSVSLFYGTLFFMYVSSRSGSAADQAKMYSLFYTIIIPLLNPFIYSLRNKEVIDALRRIMKK.

Residues 1-28 (MAEENKILVTHFVLTGLTDHPGLQAPLF) lie on the Extracellular side of the membrane. The helical transmembrane segment at 29 to 49 (LVFLVIYLITLVGNLGLMALI) threads the bilayer. The Cytoplasmic segment spans residues 50 to 56 (WKDPHLH). The helical transmembrane segment at 57-77 (TPIYLFLGSLAFADACTSSSV) threads the bilayer. Residues 78-99 (TSKMLINFLSKNHMLSMAKCAT) lie on the Extracellular side of the membrane. C97 and C179 form a disulfide bridge. A helical transmembrane segment spans residues 100–120 (QFYFFGSNATTECFLLVVMAY). Residues 121–143 (DRYVAICNPLLYPVVMSNSLCTQ) are Cytoplasmic-facing. The chain crosses the membrane as a helical span at residues 144 to 164 (FIGISYFIGFLHSAIHVGLLF). Residues 165–195 (RLTFCRSNIIHYFYCEILQLFKISCTNPTVN) lie on the Extracellular side of the membrane. Residues 196-216 (ILLIFIFSAFIQVFTFMTLIV) traverse the membrane as a helical segment. Residues 217–239 (SYSYILSAILKKKSEKGRSKAFS) lie on the Cytoplasmic side of the membrane. Residues 240-260 (TCSAHLLSVSLFYGTLFFMYV) form a helical membrane-spanning segment. Residues 261–271 (SSRSGSAADQA) lie on the Extracellular side of the membrane. A helical membrane pass occupies residues 272–292 (KMYSLFYTIIIPLLNPFIYSL). Residues 293 to 307 (RNKEVIDALRRIMKK) are Cytoplasmic-facing.

Belongs to the G-protein coupled receptor 1 family.

The protein localises to the cell membrane. Its function is as follows. Odorant receptor. This Homo sapiens (Human) protein is Olfactory receptor 5AC1 (OR5AC1).